A 58-amino-acid polypeptide reads, in one-letter code: UPF0391 membrane protein Sbal_1421 (58 aa).

2 helical membrane-spanning segments follow: residues 6–26 (LVFLVVAVIAGLLGFTGIAGA) and 28–48 (AGIAKIIFLIFIVLLVISLLV).

This sequence belongs to the UPF0391 family.

The protein resides in the cell membrane. The polypeptide is UPF0391 membrane protein Sbal_1421 (Shewanella baltica (strain OS155 / ATCC BAA-1091)).